Consider the following 172-residue polypeptide: MNYFNVGKIVNTQGLQGEMRVLSVTDFAEERFKKGNKLALFDKKDQFVMDVEIASHRKAKNFDIIKFKGMYHINDIEKFRDFSLKVAEEDLADLEDGEFYYHEIIGLEVYENDVLLGTIKEILQPGANDVWVVKRKGKRDLLLPYIPPVVLGINIEQGRVDVEIPEGLDDEN.

The 73-residue stretch at 96-168 (DGEFYYHEII…RVDVEIPEGL (73 aa)) folds into the PRC barrel domain.

The protein belongs to the RimM family. As to quaternary structure, binds ribosomal protein uS19.

Its subcellular location is the cytoplasm. In terms of biological role, an accessory protein needed during the final step in the assembly of 30S ribosomal subunit, possibly for assembly of the head region. Essential for efficient processing of 16S rRNA. May be needed both before and after RbfA during the maturation of 16S rRNA. It has affinity for free ribosomal 30S subunits but not for 70S ribosomes. The polypeptide is Ribosome maturation factor RimM (Streptococcus sanguinis (strain SK36)).